The chain runs to 100 residues: NADH-quinone oxidoreductase subunit K (100 aa).

The next 3 helical transmembrane spans lie at 4–24 (LQHG…GLII), 28–48 (LLFM…AFVV), and 60–80 (VMYI…LALL).

Belongs to the complex I subunit 4L family. NDH-1 is composed of 13 different subunits. Subunits NuoA, H, J, K, L, M, N constitute the membrane sector of the complex.

The protein resides in the cell inner membrane. The catalysed reaction is a quinone + NADH + 5 H(+)(in) = a quinol + NAD(+) + 4 H(+)(out). Its function is as follows. NDH-1 shuttles electrons from NADH, via FMN and iron-sulfur (Fe-S) centers, to quinones in the respiratory chain. The immediate electron acceptor for the enzyme in this species is believed to be ubiquinone. Couples the redox reaction to proton translocation (for every two electrons transferred, four hydrogen ions are translocated across the cytoplasmic membrane), and thus conserves the redox energy in a proton gradient. This chain is NADH-quinone oxidoreductase subunit K, found in Yersinia enterocolitica serotype O:8 / biotype 1B (strain NCTC 13174 / 8081).